A 309-amino-acid polypeptide reads, in one-letter code: Porphobilinogen deaminase (309 aa).

S-(dipyrrolylmethanemethyl)cysteine is present on Cys241.

Belongs to the HMBS family. As to quaternary structure, monomer. It depends on dipyrromethane as a cofactor.

The enzyme catalyses 4 porphobilinogen + H2O = hydroxymethylbilane + 4 NH4(+). Its pathway is porphyrin-containing compound metabolism; protoporphyrin-IX biosynthesis; coproporphyrinogen-III from 5-aminolevulinate: step 2/4. Functionally, tetrapolymerization of the monopyrrole PBG into the hydroxymethylbilane pre-uroporphyrinogen in several discrete steps. In Bacillus cereus (strain G9842), this protein is Porphobilinogen deaminase.